The primary structure comprises 132 residues: DNA-directed RNA polymerase subunit omega (132 aa).

Residues 89-109 (HSSESESIFNTSSQEEGTSFD) form a disordered region. Positions 96–105 (IFNTSSQEEG) are enriched in polar residues.

This sequence belongs to the RNA polymerase subunit omega family. The RNAP catalytic core consists of 2 alpha, 1 beta, 1 beta' and 1 omega subunit. When a sigma factor is associated with the core the holoenzyme is formed, which can initiate transcription.

It carries out the reaction RNA(n) + a ribonucleoside 5'-triphosphate = RNA(n+1) + diphosphate. Promotes RNA polymerase assembly. Latches the N- and C-terminal regions of the beta' subunit thereby facilitating its interaction with the beta and alpha subunits. The sequence is that of DNA-directed RNA polymerase subunit omega from Bartonella tribocorum (strain CIP 105476 / IBS 506).